Consider the following 321-residue polypeptide: Leucine-rich repeat-containing protein 46 (321 aa).

LRR repeat units follow at residues glutamate 45–lysine 66, asparagine 67–proline 88, serine 89–proline 110, and cysteine 111–glutamine 132. Residues asparagine 142 to glutamate 184 form the LRRCT domain. Phosphoserine occurs at positions 175 and 182. The stretch at arginine 198–glutamine 222 forms a coiled coil. A disordered region spans residues asparagine 235–lysine 321.

The protein localises to the cell projection. Its subcellular location is the cilium. It localises to the flagellum. Required for normal spermatogenesis and male fertility. Plays an important role in sperm flagellum biogenesis. The protein is Leucine-rich repeat-containing protein 46 (LRRC46) of Macaca fascicularis (Crab-eating macaque).